The following is an 89-amino-acid chain: MTEAKKSLKRTLVGKVVSDKRAKTVTVLIERRVKHELYGKIVGKSSKYHAHDETGEYKLGDIIEITESRPISKTKNWVATRLVQKAAVV.

This sequence belongs to the universal ribosomal protein uS17 family. In terms of assembly, part of the 30S ribosomal subunit.

Its function is as follows. One of the primary rRNA binding proteins, it binds specifically to the 5'-end of 16S ribosomal RNA. The sequence is that of Small ribosomal subunit protein uS17 from Albidiferax ferrireducens (strain ATCC BAA-621 / DSM 15236 / T118) (Rhodoferax ferrireducens).